The primary structure comprises 416 residues: MASSSGSSPRPAPDENEFPFGCPPTVCQDPKEPRALCCAGCLSENPRNGEDQICPKCRGEDLQSISPGSRLRTQEKAHPEVAEAGIGCPFAGVGCSFKGSPQSVQEHEVTSQTSHLNLLLGFMKQWKARLGCGLESGPMALEQNLSDLQLQAAVEVAGDLEVDCYRAPCSESQEELALQHFMKEKLLAELEGKLRVFENIVAVLNKEVEASHLALATSIHQSQLDRERILSLEQRVVELQQTLAQKDQALGKLEQSLRLMEEASFDGTFLWKITNVTRRCHESACGRTVSLFSPAFYTAKYGYKLCLRLYLNGDGTGKRTHLSLFIVIMRGEYDALLPWPFRNKVTFMLLDQNNREHAIDAFRPDLSSASFQRPQSETNVASGCPLFFPLSKLQSPKHAYVKDDTMFLKCIVETST.

A disordered region spans residues 1-24 (MASSSGSSPRPAPDENEFPFGCPP). Residue S146 is modified to Phosphoserine. Residues 182–264 (MKEKLLAELE…QSLRLMEEAS (83 aa)) are a coiled coil. Glycyl lysine isopeptide (Lys-Gly) (interchain with G-Cter in ubiquitin) cross-links involve residues K185 and K193. One can recognise an MATH domain in the interval 266–412 (DGTFLWKITN…DDTMFLKCIV (147 aa)).

Homotrimer. Heterotrimer with TRAF2. Interacts with TNFRSF1A/TNFR1, TNFRSF1B/TNFR2, TNFRSF4, TNFRSF5/CD40, TNFRSF8/CD30, TNFRSF9/CD137, TNFRSF11A/RANK, TNFRSF13C, TNFRSF18/AITR, TNFRSF17/BCMA, TNFRSF19/TROY, TNFRSF19L/RELT, XEDAR, EDAR, Epstein-Barr virus BNFL1/LMP-1, TANK/ITRAF, TRAIP and RIPK2. Interacts with BIRC2 and BIRC3 N-terminus; a single BIRC2 or BIRC3 molecule interacts with a heterotrimer formed by TRAF1 and TRAF2. Interacts with NFATC2IP, TRAFD1 and with HIVEP3. Interacts with MAP3K14. Interacts with GPS2. Polyubiquitinated by BIRC2 and/or BIRC3, leading to its subsequent proteasomal degradation. Ubiquitinated by the SCF(FBXL2) complex, leading to its degradation by the proteasome.

Adapter molecule that regulates the activation of NF-kappa-B and JNK. Plays a role in the regulation of cell survival and apoptosis. The heterotrimer formed by TRAF1 and TRAF2 is part of a E3 ubiquitin-protein ligase complex that promotes ubiquitination of target proteins, such as MAP3K14. The TRAF1/TRAF2 complex recruits the antiapoptotic E3 protein-ubiquitin ligases BIRC2 and BIRC3 to TNFRSF1B/TNFR2. This chain is TNF receptor-associated factor 1 (TRAF1), found in Homo sapiens (Human).